Consider the following 126-residue polypeptide: Cysteine-rich tail protein 1 (126 aa).

A disordered region spans residues 1-89 (MDPHETLVKN…PAGLAYAGPP (89 aa)).

This sequence belongs to the CYSRT1 family. In terms of assembly, interacts with components of the late cornfied envelope (LCE).

It localises to the cornified envelope. In terms of biological role, component of the stratum corneum that may contribute to epidermal antimicrobial host defenses. The protein is Cysteine-rich tail protein 1 (CYSRT1) of Bos taurus (Bovine).